A 30-amino-acid chain; its full sequence is Scolopendra 20528.11 Da toxin (30 aa).

The protein belongs to the CRISP family. Venom allergen 5-like subfamily. Contains 3 disulfide bonds. Expressed by the venom gland.

It is found in the secreted. The protein is Scolopendra 20528.11 Da toxin of Scolopendra angulata (Barbados giant red centipede).